Reading from the N-terminus, the 701-residue chain is Elongation factor G 2 (701 aa).

Positions 8-290 (ERYRNIGISA…AVIDYLPSPA (283 aa)) constitute a tr-type G domain. Residues 17 to 24 (AHIDAGKT), 88 to 92 (DTPGH), and 142 to 145 (NKMD) each bind GTP.

The protein belongs to the TRAFAC class translation factor GTPase superfamily. Classic translation factor GTPase family. EF-G/EF-2 subfamily.

It localises to the cytoplasm. Catalyzes the GTP-dependent ribosomal translocation step during translation elongation. During this step, the ribosome changes from the pre-translocational (PRE) to the post-translocational (POST) state as the newly formed A-site-bound peptidyl-tRNA and P-site-bound deacylated tRNA move to the P and E sites, respectively. Catalyzes the coordinated movement of the two tRNA molecules, the mRNA and conformational changes in the ribosome. This Cupriavidus pinatubonensis (strain JMP 134 / LMG 1197) (Cupriavidus necator (strain JMP 134)) protein is Elongation factor G 2.